A 493-amino-acid chain; its full sequence is Probable vesicular acetylcholine transporter-B (493 aa).

Residues 1 to 39 lie on the Cytoplasmic side of the membrane; the sequence is MQSTGAPGLAQSAVLQLSAMGERSRELGGALREPERKRR. The helical transmembrane segment at 40–60 threads the bilayer; that stretch reads LLLVVVCVALLLDNMLYMVIV. Topologically, residues 61-86 are lumenal, vesicle; that stretch reads PIIPDYLADLRGERGNSSADLDIQIG. Residue asparagine 76 is glycosylated (N-linked (GlcNAc...) asparagine). The helical transmembrane segment at 87 to 107 threads the bilayer; that stretch reads VLFASKALLQLLVNPLSGTFI. The Cytoplasmic portion of the chain corresponds to 108–113; it reads DRVGYD. The chain crosses the membrane as a helical span at residues 114 to 134; sequence LPLLIGLLVMFLSTCIFAFAE. Residues 135–143 lie on the Lumenal, vesicle side of the membrane; sequence NYGTLFAAR. Residues 144–164 form a helical membrane-spanning segment; that stretch reads SLQGLGSAFADTSGIAMIADK. Residues 165-174 are Cytoplasmic-facing; it reads FTEEAERSRA. A helical membrane pass occupies residues 175 to 195; the sequence is LGIALAFISFGSLVAPPFGGI. The Lumenal, vesicle portion of the chain corresponds to 196–203; that stretch reads LYEFAGKR. Residues 204-224 traverse the membrane as a helical segment; the sequence is VPFIVLACVCLADGVLLLTVV. At 225 to 247 the chain is on the cytoplasmic side; that stretch reads KPFSDRTRENMPVGTPIHRLMVD. Residues 248 to 268 form a helical membrane-spanning segment; the sequence is PYIAVVAGALTVCNIPLAFLE. Over 269–284 the chain is Lumenal, vesicle; sequence PTIANWMESTMDASKW. Residues 285–305 form a helical membrane-spanning segment; the sequence is QMGLVWLPAFLPHVLGVYITV. At 306–315 the chain is on the cytoplasmic side; it reads RLAARYPERQ. A helical membrane pass occupies residues 316 to 336; it reads WFYGALGMVIIGASSCTVPAC. Over 337–347 the chain is Lumenal, vesicle; the sequence is KTFGELVFPLC. The helical transmembrane segment at 348–368 threads the bilayer; it reads GICFGIALVDTALLPTLAFLV. At 369 to 378 the chain is on the cytoplasmic side; that stretch reads DVRHVSVYGS. A helical transmembrane segment spans residues 379–399; the sequence is VYAIADISYSVAYAMGPVVAG. At 400–406 the chain is on the lumenal, vesicle side; it reads QIVHNLG. The helical transmembrane segment at 407–427 threads the bilayer; sequence FVQLNLGMGLVNVLYAPALLL. The Cytoplasmic segment spans residues 428-493; that stretch reads LRPVCQIKPS…EEEESGPESA (66 aa). The segment at 467 to 493 is disordered; it reads GLSAGAGTEHGLRGRSEEEEESGPESA. Over residues 483 to 493 the composition is skewed to acidic residues; sequence EEEEESGPESA.

This sequence belongs to the major facilitator superfamily. Vesicular transporter family.

It is found in the membrane. Its function is as follows. Involved in acetylcholine transport into synaptic vesicles. This Danio rerio (Zebrafish) protein is Probable vesicular acetylcholine transporter-B (slc18a3b).